Reading from the N-terminus, the 494-residue chain is UPF0371 protein SSA_0208 (494 aa).

Belongs to the UPF0371 family.

The protein is UPF0371 protein SSA_0208 of Streptococcus sanguinis (strain SK36).